The chain runs to 241 residues: 2-C-methyl-D-erythritol 4-phosphate cytidylyltransferase (241 aa).

This sequence belongs to the IspD/TarI cytidylyltransferase family. IspD subfamily.

The catalysed reaction is 2-C-methyl-D-erythritol 4-phosphate + CTP + H(+) = 4-CDP-2-C-methyl-D-erythritol + diphosphate. The protein operates within isoprenoid biosynthesis; isopentenyl diphosphate biosynthesis via DXP pathway; isopentenyl diphosphate from 1-deoxy-D-xylulose 5-phosphate: step 2/6. Catalyzes the formation of 4-diphosphocytidyl-2-C-methyl-D-erythritol from CTP and 2-C-methyl-D-erythritol 4-phosphate (MEP). The polypeptide is 2-C-methyl-D-erythritol 4-phosphate cytidylyltransferase (Pseudoalteromonas translucida (strain TAC 125)).